We begin with the raw amino-acid sequence, 337 residues long: Ketol-acid reductoisomerase (NADP(+)) (337 aa).

Positions 3–183 (IELLYDADAD…GGARAGVIPT (181 aa)) constitute a KARI N-terminal Rossmann domain. Residues 26–29 (YGSQ), Arg-49, Ser-52, Ser-54, and 84–87 (DTSQ) each bind NADP(+). Residue His-109 is part of the active site. Position 135 (Gly-135) interacts with NADP(+). Residues 184–329 (TFREETETDL…SKLRDLMSWV (146 aa)) enclose the KARI C-terminal knotted domain. The Mg(2+) site is built by Asp-192, Glu-196, Glu-228, and Glu-232. Position 253 (Ser-253) interacts with substrate.

It belongs to the ketol-acid reductoisomerase family. Requires Mg(2+) as cofactor.

The catalysed reaction is (2R)-2,3-dihydroxy-3-methylbutanoate + NADP(+) = (2S)-2-acetolactate + NADPH + H(+). The enzyme catalyses (2R,3R)-2,3-dihydroxy-3-methylpentanoate + NADP(+) = (S)-2-ethyl-2-hydroxy-3-oxobutanoate + NADPH + H(+). The protein operates within amino-acid biosynthesis; L-isoleucine biosynthesis; L-isoleucine from 2-oxobutanoate: step 2/4. Its pathway is amino-acid biosynthesis; L-valine biosynthesis; L-valine from pyruvate: step 2/4. Involved in the biosynthesis of branched-chain amino acids (BCAA). Catalyzes an alkyl-migration followed by a ketol-acid reduction of (S)-2-acetolactate (S2AL) to yield (R)-2,3-dihydroxy-isovalerate. In the isomerase reaction, S2AL is rearranged via a Mg-dependent methyl migration to produce 3-hydroxy-3-methyl-2-ketobutyrate (HMKB). In the reductase reaction, this 2-ketoacid undergoes a metal-dependent reduction by NADPH to yield (R)-2,3-dihydroxy-isovalerate. The chain is Ketol-acid reductoisomerase (NADP(+)) from Corynebacterium diphtheriae (strain ATCC 700971 / NCTC 13129 / Biotype gravis).